The chain runs to 1070 residues: DNA-directed RNA polymerase subunit beta (1070 aa).

The protein belongs to the RNA polymerase beta chain family. As to quaternary structure, in plastids the minimal PEP RNA polymerase catalytic core is composed of four subunits: alpha, beta, beta', and beta''. When a (nuclear-encoded) sigma factor is associated with the core the holoenzyme is formed, which can initiate transcription.

The protein resides in the plastid. The protein localises to the chloroplast. The enzyme catalyses RNA(n) + a ribonucleoside 5'-triphosphate = RNA(n+1) + diphosphate. In terms of biological role, DNA-dependent RNA polymerase catalyzes the transcription of DNA into RNA using the four ribonucleoside triphosphates as substrates. The chain is DNA-directed RNA polymerase subunit beta from Citrus sinensis (Sweet orange).